Here is a 260-residue protein sequence, read N- to C-terminus: UPF0246 protein Cbei_1739 (260 aa).

Belongs to the UPF0246 family.

The polypeptide is UPF0246 protein Cbei_1739 (Clostridium beijerinckii (strain ATCC 51743 / NCIMB 8052) (Clostridium acetobutylicum)).